Reading from the N-terminus, the 648-residue chain is L-aspartate oxidase 2-b, chloroplastic (648 aa).

FAD contacts are provided by residues 98–101 (SGIA), K120, 127–134 (STNYAQGG), and D298. Residue R373 is the Proton donor/acceptor of the active site. FAD-binding positions include E458 and 474–475 (SL).

Belongs to the FAD-dependent oxidoreductase 2 family. NadB subfamily. It depends on FAD as a cofactor.

The protein resides in the plastid. The protein localises to the chloroplast. The catalysed reaction is L-aspartate + O2 = iminosuccinate + H2O2. It functions in the pathway alkaloid biosynthesis; nicotine biosynthesis. It participates in cofactor biosynthesis; NAD(+) biosynthesis; iminoaspartate from L-aspartate (oxidase route): step 1/1. Functionally, involved in the biosynthesis of pyridine alkaloid natural products, leading mainly to the production of anabasine, anatabine, nicotine and nornicotine, effective deterrents against herbivores with antiparasitic and pesticide properties (neurotoxins); nornicotine serves as the precursor in the synthesis of the carcinogen compound N'-nitrosonornicotine (NNN). Catalyzes the oxidation of L-aspartate to iminoaspartate. The sequence is that of L-aspartate oxidase 2-b, chloroplastic from Nicotiana tabacum (Common tobacco).